The chain runs to 355 residues: Probable cinnamyl alcohol dehydrogenase (355 aa).

A Zn(2+)-binding site is contributed by Cys-47. Ser-49 provides a ligand contact to NADP(+). The Zn(2+) site is built by His-69, Glu-70, Cys-100, Cys-103, Cys-106, Cys-114, and Cys-162. Residues Thr-166, 187-192 (GLGGVG), 210-215 (SSSDKK), Thr-250, Gly-274, and 297-299 (SFI) each bind NADP(+).

Belongs to the zinc-containing alcohol dehydrogenase family. As to quaternary structure, homodimer. It depends on Zn(2+) as a cofactor.

The enzyme catalyses (E)-cinnamyl alcohol + NADP(+) = (E)-cinnamaldehyde + NADPH + H(+). It carries out the reaction (E)-coniferol + NADP(+) = (E)-coniferaldehyde + NADPH + H(+). It catalyses the reaction (E)-sinapyl alcohol + NADP(+) = (E)-sinapaldehyde + NADPH + H(+). The catalysed reaction is (E)-4-coumaroyl alcohol + NADP(+) = (E)-4-coumaraldehyde + NADPH + H(+). The enzyme catalyses (E)-caffeyl alcohol + NADP(+) = (E)-caffeyl aldehyde + NADPH + H(+). It functions in the pathway aromatic compound metabolism; phenylpropanoid biosynthesis. Involved in lignin biosynthesis. Catalyzes the final step specific for the production of lignin monomers. Catalyzes the NADPH-dependent reduction of coniferaldehyde, 5-hydroxyconiferaldehyde, sinapaldehyde, 4-coumaraldehyde and caffeyl aldehyde to their respective alcohols. This Eucalyptus botryoides (Southern mahogany) protein is Probable cinnamyl alcohol dehydrogenase (CAD1).